Consider the following 378-residue polypeptide: Glutamate 5-kinase (378 aa).

Lysine 17 provides a ligand contact to ATP. Serine 58, aspartate 145, and asparagine 157 together coordinate substrate. ATP-binding positions include 177–178 and 221–227; these read TD and TGGMMTK. The PUA domain occupies 286–364; that stretch reads VGKLYLDSGA…KEIPTILGYV (79 aa).

The protein belongs to the glutamate 5-kinase family.

The protein resides in the cytoplasm. It catalyses the reaction L-glutamate + ATP = L-glutamyl 5-phosphate + ADP. It participates in amino-acid biosynthesis; L-proline biosynthesis; L-glutamate 5-semialdehyde from L-glutamate: step 1/2. Its function is as follows. Catalyzes the transfer of a phosphate group to glutamate to form L-glutamate 5-phosphate. This chain is Glutamate 5-kinase, found in Nostoc sp. (strain PCC 7120 / SAG 25.82 / UTEX 2576).